A 246-amino-acid polypeptide reads, in one-letter code: 3-deoxy-manno-octulosonate cytidylyltransferase (246 aa).

Belongs to the KdsB family.

It localises to the cytoplasm. It catalyses the reaction 3-deoxy-alpha-D-manno-oct-2-ulosonate + CTP = CMP-3-deoxy-beta-D-manno-octulosonate + diphosphate. The protein operates within nucleotide-sugar biosynthesis; CMP-3-deoxy-D-manno-octulosonate biosynthesis; CMP-3-deoxy-D-manno-octulosonate from 3-deoxy-D-manno-octulosonate and CTP: step 1/1. It functions in the pathway bacterial outer membrane biogenesis; lipopolysaccharide biosynthesis. Its function is as follows. Activates KDO (a required 8-carbon sugar) for incorporation into bacterial lipopolysaccharide in Gram-negative bacteria. This Rickettsia peacockii (strain Rustic) protein is 3-deoxy-manno-octulosonate cytidylyltransferase.